The sequence spans 173 residues: Small ribosomal subunit protein uS5 (173 aa).

The 64-residue stretch at 18–81 folds into the S5 DRBM domain; it reads LREKMIAVNR…EQARRGMFKV (64 aa).

Belongs to the universal ribosomal protein uS5 family. In terms of assembly, part of the 30S ribosomal subunit. Contacts proteins S4 and S8.

Its function is as follows. With S4 and S12 plays an important role in translational accuracy. Located at the back of the 30S subunit body where it stabilizes the conformation of the head with respect to the body. This chain is Small ribosomal subunit protein uS5, found in Bordetella avium (strain 197N).